Reading from the N-terminus, the 523-residue chain is MLEGTLQDCWTSISKMQLHWTVLGLLPVLFIAILGPRVRQIWVNYVHLTKIPSPHKKDYFCFVTETTRAEFLNECARLLRKGFASGDVIRLHASWDHIVVLSPSYAECLRADEKFSPDTFSDKEMFGAVPGFEPYRFLCTHRDLVRNVISMRLNRCFVPATRYLSEAIDDALRKQMGNDSEWREVPLGNAVLKILTQSSFRALQGPELCYDDEWLDIATQYIVTSVTGVTALRKLPKFLVPLIHWFHPDAIKSRRLLSRARAKLIPFYEKRKKELYQARRNGTYRPEDADAFGWYEELADGRDYDPVVAQLTVAVAATHSTTDFMCQFLSDMVRYPEYIQPLRDELILALKEKGWKASTILQLPLLDSVMKESQRLKPVAMGFMRSIAQHDVYLQDAVKIPKNASVIVSAHSMRDATVYENPDSFDGYRFINPTKHPESRHFTSVSVNHMGFGFGKHACPGRFFVNLETKILIAHLLLKYDWKFANDGCPAIRTSGFDQVVDPSAKMLVRRRKEEIRIEALYE.

The helical transmembrane segment at 16 to 36 (MQLHWTVLGLLPVLFIAILGP) threads the bilayer. N-linked (GlcNAc...) asparagine glycosylation is found at Asn-178, Asn-281, and Asn-403. Cys-459 contributes to the heme binding site.

This sequence belongs to the cytochrome P450 family. Heme serves as cofactor.

It is found in the membrane. It functions in the pathway mycotoxin biosynthesis. Cytochrome P450 monooxygenase; part of the gene cluster that mediates the biosynthesis of the diterpene glucoside brassicicene C. In the first step of the brassicicene C biosynthesis, the bifunctional diterpene synthase bsc8 that possesses both prenyl transferase and terpene cyclase activity, converts isopentenyl diphosphate and dimethylallyl diphosphate into geranylgeranyl diphosphate (GGDP) that is further converted into fusicocca-2,10(14)-diene, the first precursor for brassicicene C. Fusicocca-2,10(14)-diene is then substrate of cytochrome P450 monooxygenase bsc1 for hydroxylation at the C-8 position. Oxidation at C-16 position to aldehyde is then catalyzed by the cytochrome P450 monooyxygenase bsc7, yielding fusicocca-2,10(14)-diene-8-beta,16-diol. Follows the isomerization of the double bond and reduction of aldehyde to alcohol catalyzed by the short-chain dehydrogenase/reductase bsc3 to yield the diol compound fusicocca-1,10(14)-diene-8 beta,16-diol. The next step is the oxidation at the C-3 position of fusicocca-2,10(14)-diene-8-beta,16-diol catalyzed by the alpha-ketoglutarate dependent dioxygenase bsc9, to produce a triol compound. Methylation of the hydroxy group at position 16 is performed by the methyltransferase bsc6. 16-O-methylation is followed by oxidation at the C-13 position to ketone and an alkyl shift of the methyl group leads to brassicicene C. Although the probable acetyltransferase bsc4 is included in the gene cluster, no acetylation reactions are necessary for brassicicene C biosynthesis. However, the fact that brassicicene E, which is a structurally related compound having an acetoxy group at position 12, was previously isolated from another strain of A.brassicicola suggests that the ATCC 96836 strain might also produce a small amount of brassicicene E. The protein is Cytochrome P450 monooxygenase bsc5 of Alternaria brassicicola (Dark leaf spot agent).